Consider the following 374-residue polypeptide: GPN-loop GTPase 1 (374 aa).

A2 carries the N-acetylalanine modification. Position 29 to 34 (29 to 34 (GSGKTT)) interacts with GTP. The short motif at 86 to 88 (GPN) is the Gly-Pro-Asn (GPN)-loop; involved in dimer interface element. GTP is bound at residue 189 to 192 (NKTD). S301, S312, and S314 each carry phosphoserine. A disordered region spans residues 326–354 (RGTLDEEDEEADSDTDDIDHRVTEESHEE). A Phosphothreonine modification is found at T328. The span at 330–342 (DEEDEEADSDTDD) shows a compositional bias: acidic residues. Residue S338 is modified to Phosphoserine. T340 carries the phosphothreonine modification. The segment covering 343 to 354 (IDHRVTEESHEE) has biased composition (basic and acidic residues).

Belongs to the GPN-loop GTPase family. In terms of assembly, heterodimer with GPN3. Binds to RNA polymerase II (RNAPII). Interacts directly with RNAPII subunits RPB4 and RPB7 and the CTD of RPB1. Interacts with XPA. Expressed ubiquitously.

The protein localises to the cytoplasm. It is found in the nucleus. Small GTPase required for proper nuclear import of RNA polymerase II (RNAPII). May act at an RNAP assembly step prior to nuclear import. Forms an interface between the RNA polymerase II enzyme and chaperone/scaffolding proteins, suggesting that it is required to connect RNA polymerase II to regulators of protein complex formation. May be involved in nuclear localization of XPA. In Homo sapiens (Human), this protein is GPN-loop GTPase 1.